A 399-amino-acid chain; its full sequence is Phosphoglycerate kinase (399 aa).

Substrate-binding positions include 22–24, arginine 38, 61–64, arginine 120, and arginine 153; these read DFN and HLGR. Residues lysine 204, glutamate 326, and 353 to 356 contribute to the ATP site; that span reads GGDT.

This sequence belongs to the phosphoglycerate kinase family. Monomer.

The protein localises to the cytoplasm. The enzyme catalyses (2R)-3-phosphoglycerate + ATP = (2R)-3-phospho-glyceroyl phosphate + ADP. It functions in the pathway carbohydrate degradation; glycolysis; pyruvate from D-glyceraldehyde 3-phosphate: step 2/5. The sequence is that of Phosphoglycerate kinase from Geotalea daltonii (strain DSM 22248 / JCM 15807 / FRC-32) (Geobacter daltonii).